The primary structure comprises 85 residues: Cytochrome c6 (85 aa).

Residues Cys-14, Cys-17, His-18, and Met-58 each coordinate heme c.

It belongs to the cytochrome c family. PetJ subfamily. In terms of assembly, monomer. In terms of processing, binds 1 heme c group covalently per subunit.

The protein localises to the cellular thylakoid lumen. Functions as an electron carrier between membrane-bound cytochrome b6-f and photosystem I in oxygenic photosynthesis. The polypeptide is Cytochrome c6 (petJ) (Leptolyngbya boryana (Plectonema boryanum)).